A 76-amino-acid polypeptide reads, in one-letter code: MKLTCMMIVAVLFLTAWTFVTAVPHSSNALENLYLKAHHEMNNPEDSELNKRCYDGGTSCDSGIQCCSGWCIFVCL.

The N-terminal stretch at 1–22 is a signal peptide; the sequence is MKLTCMMIVAVLFLTAWTFVTA. Positions 23–52 are excised as a propeptide; it reads VPHSSNALENLYLKAHHEMNNPEDSELNKR. Intrachain disulfides connect C53–C67, C60–C71, and C66–C75.

This sequence belongs to the conotoxin O1 superfamily. Expressed by the venom duct.

Its subcellular location is the secreted. In terms of biological role, omega-conotoxins act at presynaptic membranes, they bind and block voltage-gated calcium channels (Cav). The sequence is that of Omega-conotoxin-like TxMKLT1-0211 from Conus textile (Cloth-of-gold cone).